A 314-amino-acid chain; its full sequence is tRNA pseudouridine synthase B (314 aa).

H43 lines the substrate pocket. The active-site Nucleophile is the D48. Residues Y76, Y179, and L200 each coordinate substrate.

The protein belongs to the pseudouridine synthase TruB family. Type 1 subfamily.

The catalysed reaction is uridine(55) in tRNA = pseudouridine(55) in tRNA. Its function is as follows. Responsible for synthesis of pseudouridine from uracil-55 in the psi GC loop of transfer RNAs. The protein is tRNA pseudouridine synthase B of Salmonella typhi.